We begin with the raw amino-acid sequence, 474 residues long: UDP glycosyltransferase 9 (474 aa).

UDP-alpha-D-glucose contacts are provided by residues Ser-296, 349–350 (WC), 367–375 (HCGWNSTLE), and 389–392 (WADQ).

Belongs to the UDP-glycosyltransferase family.

This Catharanthus roseus (Madagascar periwinkle) protein is UDP glycosyltransferase 9.